Reading from the N-terminus, the 243-residue chain is tRNA (guanine-N(1)-)-methyltransferase (243 aa).

Residues Gly-110 and 130–135 contribute to the S-adenosyl-L-methionine site; that span reads VGDYVM.

This sequence belongs to the RNA methyltransferase TrmD family. As to quaternary structure, homodimer.

The protein localises to the cytoplasm. The enzyme catalyses guanosine(37) in tRNA + S-adenosyl-L-methionine = N(1)-methylguanosine(37) in tRNA + S-adenosyl-L-homocysteine + H(+). Specifically methylates guanosine-37 in various tRNAs. The polypeptide is tRNA (guanine-N(1)-)-methyltransferase (Treponema denticola (strain ATCC 35405 / DSM 14222 / CIP 103919 / JCM 8153 / KCTC 15104)).